The primary structure comprises 152 residues: Deoxyuridine 5'-triphosphate nucleotidohydrolase (152 aa).

Residues 71 to 73 (RSG), asparagine 84, 88 to 90 (LID), and methionine 98 contribute to the substrate site.

The protein belongs to the dUTPase family. The cofactor is Mg(2+).

It carries out the reaction dUTP + H2O = dUMP + diphosphate + H(+). It participates in pyrimidine metabolism; dUMP biosynthesis; dUMP from dCTP (dUTP route): step 2/2. Functionally, this enzyme is involved in nucleotide metabolism: it produces dUMP, the immediate precursor of thymidine nucleotides and it decreases the intracellular concentration of dUTP so that uracil cannot be incorporated into DNA. This Shewanella putrefaciens (strain CN-32 / ATCC BAA-453) protein is Deoxyuridine 5'-triphosphate nucleotidohydrolase.